The following is a 1019-amino-acid chain: Insulin-degrading enzyme (1019 aa).

Histidine 108 is a Zn(2+) binding site. The active-site Proton acceptor is the glutamate 111. Zn(2+)-binding residues include histidine 112 and glutamate 189. Lysine 192 is subject to N6-succinyllysine. Residues 336 to 342 (HLIGHEG) and 359 to 363 (LVGGQ) each bind substrate. Position 429 (arginine 429) interacts with ATP. Position 697 is an N6-succinyllysine (lysine 697). Residues 853–858 (EKPPHY) carry the SlyX motif motif. ATP is bound at residue 895–901 (DKPKKLS).

This sequence belongs to the peptidase M16 family. As to quaternary structure, homodimer. Can also form homotetramers. In terms of assembly, (Microbial infection) Interacts (via N-terminus) with varicella-zoster virus (VZV) envelope glycoprotein E (via N-terminus); the membrane-associated isoform may function as an entry receptor for this virus. Requires Zn(2+) as cofactor. In terms of processing, the N-terminus is blocked. In terms of tissue distribution, detected in brain and in cerebrospinal fluid (at protein level).

It localises to the cytoplasm. The protein resides in the cytosol. It is found in the cell membrane. The protein localises to the secreted. The catalysed reaction is Degradation of insulin, glucagon and other polypeptides. No action on proteins.. With respect to regulation, activated by small peptides. Activated by ATP and GTP, and to a lesser extent by CTP, TTP and PPPi. Inhibited by bacitracin. In vitro modification of Cys residues impairs enzyme activity. In terms of biological role, plays a role in the cellular breakdown of insulin, APP peptides, IAPP peptides, natriuretic peptides, glucagon, bradykinin, kallidin, and other peptides, and thereby plays a role in intercellular peptide signaling. Substrate binding induces important conformation changes, making it possible to bind and degrade larger substrates, such as insulin. Contributes to the regulation of peptide hormone signaling cascades and regulation of blood glucose homeostasis via its role in the degradation of insulin, glucagon and IAPP. Plays a role in the degradation and clearance of APP-derived amyloidogenic peptides that are secreted by neurons and microglia. Degrades the natriuretic peptides ANP, BNP and CNP, inactivating their ability to raise intracellular cGMP. Also degrades an aberrant frameshifted 40-residue form of NPPA (fsNPPA) which is associated with familial atrial fibrillation in heterozygous patients. Involved in antigen processing. Produces both the N terminus and the C terminus of MAGEA3-derived antigenic peptide (EVDPIGHLY) that is presented to cytotoxic T lymphocytes by MHC class I. Its function is as follows. (Microbial infection) The membrane-associated isoform acts as an entry receptor for varicella-zoster virus (VZV). The sequence is that of Insulin-degrading enzyme from Homo sapiens (Human).